An 801-amino-acid chain; its full sequence is Phenylalanine--tRNA ligase beta subunit (801 aa).

The tRNA-binding domain occupies 39 to 153 (AEGLSKLVVG…EGAIPGDSIF (115 aa)). The region spanning 406-481 (TEPVEVSTTL…RIYGYEKLPT (76 aa)) is the B5 domain. 4 residues coordinate Mg(2+): aspartate 459, aspartate 465, glutamate 468, and glutamate 469. Residues 708-801 (TKYPSVSRDI…LVEKVNAEIR (94 aa)) enclose the FDX-ACB domain.

This sequence belongs to the phenylalanyl-tRNA synthetase beta subunit family. Type 1 subfamily. Tetramer of two alpha and two beta subunits. Mg(2+) is required as a cofactor.

It localises to the cytoplasm. The catalysed reaction is tRNA(Phe) + L-phenylalanine + ATP = L-phenylalanyl-tRNA(Phe) + AMP + diphosphate + H(+). The sequence is that of Phenylalanine--tRNA ligase beta subunit from Streptococcus agalactiae serotype Ia (strain ATCC 27591 / A909 / CDC SS700).